We begin with the raw amino-acid sequence, 826 residues long: Leucine--tRNA ligase (826 aa).

The short motif at 41 to 51 (PYPSGKLHMGH) is the 'HIGH' region element. Residues 586–590 (KMSKS) carry the 'KMSKS' region motif. K589 contributes to the ATP binding site.

Belongs to the class-I aminoacyl-tRNA synthetase family.

It localises to the cytoplasm. The catalysed reaction is tRNA(Leu) + L-leucine + ATP = L-leucyl-tRNA(Leu) + AMP + diphosphate. This is Leucine--tRNA ligase from Natranaerobius thermophilus (strain ATCC BAA-1301 / DSM 18059 / JW/NM-WN-LF).